The chain runs to 545 residues: Lysine--tRNA ligase (545 aa).

The short motif at 33 to 41 is the 'HIGH' region element; the sequence is VSGLQHIGR. The 'KMSKS' region motif lies at 288 to 292; it reads DMSSS.

It belongs to the class-I aminoacyl-tRNA synthetase family.

Its subcellular location is the cytoplasm. It catalyses the reaction tRNA(Lys) + L-lysine + ATP = L-lysyl-tRNA(Lys) + AMP + diphosphate. This is Lysine--tRNA ligase (lysS) from Aeropyrum pernix (strain ATCC 700893 / DSM 11879 / JCM 9820 / NBRC 100138 / K1).